The following is a 315-amino-acid chain: Methionyl-tRNA formyltransferase (315 aa).

(6S)-5,6,7,8-tetrahydrofolate is bound at residue 113 to 116 (SILP).

The protein belongs to the Fmt family.

The catalysed reaction is L-methionyl-tRNA(fMet) + (6R)-10-formyltetrahydrofolate = N-formyl-L-methionyl-tRNA(fMet) + (6S)-5,6,7,8-tetrahydrofolate + H(+). In terms of biological role, attaches a formyl group to the free amino group of methionyl-tRNA(fMet). The formyl group appears to play a dual role in the initiator identity of N-formylmethionyl-tRNA by promoting its recognition by IF2 and preventing the misappropriation of this tRNA by the elongation apparatus. The sequence is that of Methionyl-tRNA formyltransferase from Vibrio cholerae serotype O1 (strain ATCC 39541 / Classical Ogawa 395 / O395).